A 356-amino-acid polypeptide reads, in one-letter code: Homoserine O-acetyltransferase (356 aa).

An AB hydrolase-1 domain is found at 49-337 (VLICHALTGS…KSTHGHDAFL (289 aa)). The active-site Nucleophile is the S143. Residue R212 coordinates substrate. Catalysis depends on residues D304 and H333. A substrate-binding site is contributed by D334.

It belongs to the AB hydrolase superfamily. MetX family. Homodimer.

It localises to the cytoplasm. It carries out the reaction L-homoserine + acetyl-CoA = O-acetyl-L-homoserine + CoA. It participates in amino-acid biosynthesis; L-methionine biosynthesis via de novo pathway; O-acetyl-L-homoserine from L-homoserine: step 1/1. Functionally, transfers an acetyl group from acetyl-CoA to L-homoserine, forming acetyl-L-homoserine. The protein is Homoserine O-acetyltransferase of Nostoc punctiforme (strain ATCC 29133 / PCC 73102).